Consider the following 489-residue polypeptide: Cytochrome P450 monooxygenase tazI (489 aa).

Heme is bound at residue cysteine 433.

Belongs to the cytochrome P450 family. The cofactor is heme.

It participates in secondary metabolite biosynthesis. In terms of biological role, cytochrome P450 monooxygenase; part of the gene cluster that mediates the biosynthesis of azaterrilone A and other azaphilones, a class of fungal metabolites characterized by a highly oxygenated pyrano-quinone bicyclic core and exhibiting a broad range of bioactivities. The first step of the pathway begins with the non-reducing polyketide synthase tazA that assembles one acetyl-CoA starter unit, five malonyl-CoA units, and catalyzes a series of Claisen condensations, methylation, PT-mediated cyclization, and finally releases the first hexaketide precursor through the R-domain. The tazA product then undergoes reduction on its terminal ketone and the following pyran-ring formation by yet undetermined enzyme(s). Dehydration and enoyl reduction, possibly involving the trans-enoyl reductase tazE leads to the next intermediate. TazD is predicted as an acetyltransferase and might catalyze the acetylation steps leading to the synthesis of azaterrilone A. Azaterrilone A is not the final product of the taz pathway and both the highly reducing polyketide synthase tazB and the dual enzyme tazHJ catalyze late steps of the pathway, leading to the production of the 2 final stereoisomers that contain additional polyketide modification whose structures have still to be determined. This chain is Cytochrome P450 monooxygenase tazI, found in Aspergillus terreus (strain NIH 2624 / FGSC A1156).